A 589-amino-acid polypeptide reads, in one-letter code: uncharacterized protein (589 aa).

Disordered regions lie at residues 328-365, 379-459, 525-555, and 569-589; these read LSST…EDGP, SLLG…DPSN, RSTS…GAVK, and VRGT…SRDM. A compositionally biased stretch (polar residues) spans 398-425; sequence VSLSSASTSARPTQRRSSLTPCSQTPQE. Residues 426 to 445 are compositionally biased toward basic and acidic residues; that stretch reads THQHAREALTTRMESQREAN. Residues 536–545 are compositionally biased toward acidic residues; sequence QGDDDDEEDG.

This is an uncharacterized protein from Mycosarcoma maydis (Corn smut fungus).